The following is a 404-amino-acid chain: Corticosteroid-binding globulin (404 aa).

A signal peptide spans 1 to 30 (MAWSTRTMMSLALYTCFLWLLTSGLKTVQS). Asn-95 and Asn-225 each carry an N-linked (GlcNAc...) asparagine glycan. Position 253 (Gln-253) interacts with cortisol. N-linked (GlcNAc...) asparagine glycosylation is present at Asn-259. Cortisol is bound at residue Glu-285. Residue Asn-326 is glycosylated (N-linked (GlcNAc...) asparagine). Cortisol is bound at residue Trp-392.

This sequence belongs to the serpin family. Expressed by the liver; secreted in plasma.

The protein resides in the secreted. In terms of biological role, major transport protein for glucocorticoids and progestins in the blood of almost all vertebrate species. This chain is Corticosteroid-binding globulin (SERPINA6), found in Mesocricetus auratus (Golden hamster).